The following is a 379-amino-acid chain: Homoserine O-succinyltransferase (379 aa).

The AB hydrolase-1 domain maps to 51–360; sequence NAVLICHALS…DAPQGHDAFL (310 aa). Catalysis depends on Ser157, which acts as the Nucleophile. Residue Arg227 participates in substrate binding. Catalysis depends on residues Asp323 and His356. Residue Asp357 coordinates substrate.

Belongs to the AB hydrolase superfamily. MetX family. Homodimer.

It localises to the cytoplasm. The catalysed reaction is L-homoserine + succinyl-CoA = O-succinyl-L-homoserine + CoA. It functions in the pathway amino-acid biosynthesis; L-methionine biosynthesis via de novo pathway; O-succinyl-L-homoserine from L-homoserine: step 1/1. Its function is as follows. Transfers a succinyl group from succinyl-CoA to L-homoserine, forming succinyl-L-homoserine. The protein is Homoserine O-succinyltransferase of Pseudomonas aeruginosa (strain UCBPP-PA14).